The following is a 165-amino-acid chain: Chorismate pyruvate-lyase (165 aa).

Substrate-binding residues include M35, R77, L115, and E156.

The protein belongs to the UbiC family. In terms of assembly, monomer.

It is found in the cytoplasm. It carries out the reaction chorismate = 4-hydroxybenzoate + pyruvate. Its pathway is cofactor biosynthesis; ubiquinone biosynthesis. Removes the pyruvyl group from chorismate, with concomitant aromatization of the ring, to provide 4-hydroxybenzoate (4HB) for the ubiquinone pathway. The sequence is that of Chorismate pyruvate-lyase from Escherichia coli O127:H6 (strain E2348/69 / EPEC).